The primary structure comprises 226 residues: Lipoprotein-releasing system ATP-binding protein LolD (226 aa).

The region spanning 6-226 is the ABC transporter domain; the sequence is IELKSVERHY…TLADGKVVPL (221 aa). Position 42–49 (42–49) interacts with ATP; it reads APSGTGKS.

It belongs to the ABC transporter superfamily. Lipoprotein translocase (TC 3.A.1.125) family. In terms of assembly, the complex is composed of two ATP-binding proteins (LolD) and two transmembrane proteins (LolC and LolE).

It localises to the cell inner membrane. Functionally, part of the ABC transporter complex LolCDE involved in the translocation of mature outer membrane-directed lipoproteins, from the inner membrane to the periplasmic chaperone, LolA. Responsible for the formation of the LolA-lipoprotein complex in an ATP-dependent manner. In Mesorhizobium japonicum (strain LMG 29417 / CECT 9101 / MAFF 303099) (Mesorhizobium loti (strain MAFF 303099)), this protein is Lipoprotein-releasing system ATP-binding protein LolD.